Reading from the N-terminus, the 477-residue chain is Stromelysin-1 (477 aa).

The first 17 residues, 1–17, serve as a signal peptide directing secretion; the sequence is MKNLPILLLLCVAACSA. Residues 18-99 constitute a propeptide, activation peptide; the sequence is YPLDRSARDE…SRCGVPDVGH (82 aa). The short motif at 90 to 97 is the Cysteine switch element; that stretch reads SRCGVPDV. Position 92 (cysteine 92) interacts with Zn(2+). Asparagine 120 carries an N-linked (GlcNAc...) asparagine glycan. Residues aspartate 124 and aspartate 158 each coordinate Ca(2+). Residues histidine 168 and aspartate 170 each contribute to the Zn(2+) site. Residues aspartate 175, glycine 176, glycine 178, and valine 180 each coordinate Ca(2+). Position 183 (histidine 183) interacts with Zn(2+). Glycine 190, asparagine 192, and aspartate 194 together coordinate Ca(2+). A Zn(2+)-binding site is contributed by histidine 196. Residues aspartate 198, aspartate 199, and glutamate 201 each coordinate Ca(2+). Zn(2+) is bound at residue histidine 218. Glutamate 219 is an active-site residue. Positions 222 and 228 each coordinate Zn(2+). The tract at residues 260 to 285 is disordered; it reads QSLYGPPPASPDSPVEPSEPEPPAPG. Hemopexin repeat units follow at residues 287–336, 337–383, 385–433, and 434–477; these read LAMC…WPSL, PSGI…GFPP, VRKI…FPGI, and DSKL…WFNC. Cysteine 290 and cysteine 477 are joined by a disulfide. Residue aspartate 297 coordinates Ca(2+). Aspartate 389 and aspartate 438 together coordinate Ca(2+).

This sequence belongs to the peptidase M10A family. The cofactor is Ca(2+). Zn(2+) is required as a cofactor.

It is found in the secreted. Its subcellular location is the extracellular space. It localises to the extracellular matrix. It carries out the reaction Preferential cleavage where P1', P2' and P3' are hydrophobic residues.. In terms of biological role, metalloproteinase with a rather broad substrate specificity that can degrade fibronectin, laminin, gelatins of type I, III, IV, and V; collagens III, IV, X, and IX, and cartilage proteoglycans. Activates different molecules including growth factors, plasminogen or other matrix metalloproteinases such as MMP9. Once released into the extracellular matrix (ECM), the inactive pro-enzyme is activated by the plasmin cascade signaling pathway. Also acts intracellularly. For example, in dopaminergic neurons, gets activated by the serine protease HTRA2 upon stress and plays a pivotal role in DA neuronal degeneration by mediating microglial activation and alpha-synuclein/SNCA cleavage. In addition, plays a role in immune response and possesses antiviral activity against various viruses. Mechanistically, translocates from the cytoplasm into the cell nucleus upon virus infection to influence NF-kappa-B activities. The protein is Stromelysin-1 (MMP3) of Equus caballus (Horse).